Consider the following 68-residue polypeptide: Serine palmitoyltransferase small subunit A (68 aa).

Residues 1–9 are Cytoplasmic-facing; the sequence is MAFGDAWKQ. A helical membrane pass occupies residues 10–26; the sequence is LSWFYYQYLLVTALYML. The Lumenal portion of the chain corresponds to 27-31; the sequence is EPWER. A helical transmembrane segment spans residues 32–54; sequence TIFNSLLISVAAMAVYTGYVFMP. Residues 55-68 lie on the Cytoplasmic side of the membrane; sequence QHIMAILHYFEVVQ.

Belongs to the SPTSS family. SPTSSA subfamily. As to quaternary structure, component of the serine palmitoyltransferase (SPT) complex, which is composed of SPTLC1, SPTLC2 or SPTLC3 and SPTSSA or SPTSSB. The heterodimer consisting of SPTLC1 and SPTLC2/SPTLC3 forms the catalytic core of the enzyme, while SPTSSA or SPTSSB subunits determine substrate specificity. SPT also interacts with ORMDL proteins, especially ORMDL3, which negatively regulate SPT activity in the presence of ceramides.

It localises to the endoplasmic reticulum membrane. It participates in lipid metabolism; sphingolipid metabolism. In terms of biological role, component of the serine palmitoyltransferase multisubunit enzyme (SPT) that catalyzes the initial and rate-limiting step in sphingolipid biosynthesis by condensing L-serine and activated acyl-CoA (most commonly palmitoyl-CoA) to form long-chain bases. The SPT complex is composed of SPTLC1, SPTLC2 or SPTLC3 and SPTSSA or SPTSSB. Within this complex, the heterodimer consisting of SPTLC1 and SPTLC2/SPTLC3 forms the catalytic core. Within the SPT complex, SPTSSA stimulates the catalytic activity and plays a role in substrate specificity, which depends upon the overall complex composition. The SPTLC1-SPTLC2-SPTSSA complex shows a strong preference for C16-CoA substrate, while the SPTLC1-SPTLC3-SPTSSA isozyme uses both C14-CoA and C16-CoA as substrates, with a slight preference for C14-CoA. Independently of its action as a SPT component, may be involved in MBOAT7 localization to mitochondria-associated membranes, a membrane bridge between the endoplasmic reticulum and mitochondria, may hence affect MBOAT7-catalyzed incorporation of arachidonic acid into phosphatidylinositol. The chain is Serine palmitoyltransferase small subunit A (sptssa) from Danio rerio (Zebrafish).